A 360-amino-acid chain; its full sequence is uncharacterized protein (360 aa).

An NAD(+)-binding site is contributed by 4 to 22 (KVLHIGAGGFGERWCDTFL).

Its function is as follows. Could be a NAD-dependent oxidoreductase. This is an uncharacterized protein from Sinorhizobium fredii (strain NBRC 101917 / NGR234).